We begin with the raw amino-acid sequence, 37 residues long: Large ribosomal subunit protein bL36 (37 aa).

This sequence belongs to the bacterial ribosomal protein bL36 family.

The polypeptide is Large ribosomal subunit protein bL36 (Thermus thermophilus (strain ATCC BAA-163 / DSM 7039 / HB27)).